Consider the following 495-residue polypeptide: MSKPAAAAPSDPSKPSKPLKEVPGSYGLPVLGAVKDRLDFYWFQGDTEFFRIRMEQHKSTVFRVNYSPGPPGYPDSRGIILLDQKSFSVLLDNSKVDKSDTLLGPYIPNLAFTGGYRVLPYLDTSEAKHTAYKDLIFELLHVNSSRIIPEYNKVFAETAGSWEERIAKSGKAEVFASSDSMITKFLLRTIVHKDPAEPGPASLGPKFRDTYQLWTGVNFAGIAHTPLPHFLEELLFHTFRLPPFLVKKQYKALANFYRTHATEVLDLAEKKYGLDREETVHQLILILGINARLGLHKMIPALIYYLGLLGEDFQAKIAAEVRSAVHKNRAQGEEGVNITTQALLEMPLLRSTVLETLRLTPSIFYIYGRAREDMVIESHDAAFQIKKGELLGGHQYFVMRDPEVFEEPHKFVADRFLGERGKAVLPYLVWSNGRETESPSSSNKQCPAKDVAELITMQFVAEMFLRYDSFEITKDSFINTTELNVHLKSLKKRSV.

C446 provides a ligand contact to heme.

Belongs to the cytochrome P450 family. Requires heme as cofactor.

It carries out the reaction (13S)-hydroperoxy-(9Z,11E)-octadecadienoate = etheroleate + H2O. The enzyme catalyses (13S)-hydroperoxy-(9Z,11E,15Z)-octadecatrienoate = etherolenate + H2O. The protein operates within lipid metabolism; oxylipin biosynthesis. Functionally, divinyl ether synthase involved in oxylipin biosynthesis. Catalyzes the conversion of (13S)-hydroperoxy-(9Z,11E)-octadecadienoate (13-HPOD) to etheroleate and (13S)-hydroperoxy-(9Z,11E,15Z)-octadecatrienoate (13-HPOT) to etherolenate. Has no activity with the corresponding 9-hydroperoxides (9-HPOD and 9-HPOT). The chain is Divinyl ether synthase CYP74M3 from Selaginella moellendorffii (Spikemoss).